Here is a 656-residue protein sequence, read N- to C-terminus: Chaperone protein DnaK (656 aa).

Over residues 590–605 (GGAAGGAAGGAAGGAA) the composition is skewed to gly residues. The tract at residues 590-656 (GGAAGGAAGG…DGQPKPGPAA (67 aa)) is disordered. Over residues 606–621 (GDAAGAAGDSTGDAAG) the composition is skewed to low complexity. Positions 622 to 635 (AAGGPSEGPAGDAG) are enriched in gly residues.

The protein belongs to the heat shock protein 70 family.

Functionally, acts as a chaperone. This is Chaperone protein DnaK from Cenarchaeum symbiosum (strain A).